The sequence spans 380 residues: Cytochrome b (380 aa).

4 helical membrane passes run 34–54, 78–99, 114–134, and 179–199; these read FGSL…FLAM, WLIR…YLHI, WNIG…GYVL, and FFTF…IHLL. Positions 84 and 98 each coordinate heme b. Heme b is bound by residues His-183 and His-197. His-202 contacts a ubiquinone. 4 helical membrane-spanning segments follow: residues 227–247, 289–309, 321–341, and 348–368; these read YKDL…ALFT, LGGV…PILH, ITQI…WIGG, and FITI…ILFP.

Belongs to the cytochrome b family. The cytochrome bc1 complex contains 3 respiratory subunits (MT-CYB, CYC1 and UQCRFS1), 2 core proteins (UQCRC1 and UQCRC2) and probably 6 low-molecular weight proteins. Heme b serves as cofactor.

The protein resides in the mitochondrion inner membrane. Its function is as follows. Component of the ubiquinol-cytochrome c reductase complex (complex III or cytochrome b-c1 complex) that is part of the mitochondrial respiratory chain. The b-c1 complex mediates electron transfer from ubiquinol to cytochrome c. Contributes to the generation of a proton gradient across the mitochondrial membrane that is then used for ATP synthesis. This chain is Cytochrome b (mt-cyb), found in Hemitrygon laosensis (Mekong freshwater stingray).